Here is a 104-residue protein sequence, read N- to C-terminus: Iron-sulfur cluster assembly protein CyaY (104 aa).

It belongs to the frataxin family.

Involved in iron-sulfur (Fe-S) cluster assembly. May act as a regulator of Fe-S biogenesis. The polypeptide is Iron-sulfur cluster assembly protein CyaY (Vibrio parahaemolyticus serotype O3:K6 (strain RIMD 2210633)).